Here is a 267-residue protein sequence, read N- to C-terminus: Interleukin-15 receptor subunit alpha (267 aa).

The signal sequence occupies residues 1-30 (MAPRRARGCRTLGLPALLLLLLLRPPATRG). Positions 31-95 (ITCPPPMSVE…WTTPSLKCIR (65 aa)) constitute a Sushi domain. Over 31-205 (ITCPPPMSVE…VYPQGHSDTT (175 aa)) the chain is Extracellular. Cystine bridges form between Cys-33–Cys-75 and Cys-59–Cys-93. The tract at residues 102–178 (QRPAPPSTVT…ESSHGTPSQT (77 aa)) is disordered. A compositionally biased stretch (polar residues) spans 108 to 124 (STVTTAGVTPQPESLSP). Over residues 129–145 (PAASSPSSNNTAATTAA) the composition is skewed to low complexity. N-linked (GlcNAc...) asparagine glycosylation is present at Asn-137. Polar residues predominate over residues 152–165 (LMPSKSPSTGTTEI). The chain crosses the membrane as a helical span at residues 206–228 (VAISTSTVLLCGLSAVSLLACYL). The Cytoplasmic portion of the chain corresponds to 229-267 (KSRQTPPLASVEMEAMEALPVTWGTSSRDEDLENCSHHL).

As to quaternary structure, the interleukin-15 receptor IL15R is a heterotrimer of IL15RA, IL2RB and IL2RG. IL15RA also self-associates. Interacts with SYK. N-glycosylated and O-glycosylated. In terms of processing, a soluble form (sIL-15RA) arises from proteolytic shedding of the membrane-anchored receptor. It also binds IL-15 and thus interferes with IL-15 binding to the membrane receptor. As to expression, expressed in neutrophils (at protein level). Expressed in fetal brain with higher expression in the hippocampus and cerebellum than in cortex and thalamus. Higher levels of soluble sIL-15RA form in comparison with membrane-bound forms is present in all brain structures. Isoforms 1, 3, 4, 5, 6, 7, 8 and 9: Widely expressed.

It localises to the membrane. It is found in the nucleus membrane. The protein resides in the cell surface. The protein localises to the endoplasmic reticulum membrane. Its subcellular location is the golgi apparatus membrane. It localises to the cytoplasmic vesicle membrane. It is found in the secreted. The protein resides in the extracellular space. In terms of biological role, high-affinity receptor for interleukin-15. Can signal both in cis and trans where IL15R from one subset of cells presents IL15 to neighboring IL2RG-expressing cells. In neutrophils, binds and activates kinase SYK in response to IL15 stimulation. In neutrophils, required for IL15-induced phagocytosis in a SYK-dependent manner. Expression of different isoforms may alter or interfere with signal transduction. Does not bind IL15. The chain is Interleukin-15 receptor subunit alpha (IL15RA) from Homo sapiens (Human).